Here is a 359-residue protein sequence, read N- to C-terminus: Tropomodulin-1 (359 aa).

The tract at residues 36–61 is disordered; sequence ELDPDNALLPAGLRQKDQTTKAPTGP. The interval 39–138 is tropomyosin-binding; the sequence is PDNALLPAGL…CDIAAILGMH (100 aa).

The protein belongs to the tropomodulin family. Binds to the N-terminus of tropomyosin and to actin. Interacts with FLII.

The protein resides in the cytoplasm. The protein localises to the cytoskeleton. Blocks the elongation and depolymerization of the actin filaments at the pointed end. The Tmod/TM complex contributes to the formation of the short actin protofilament, which in turn defines the geometry of the membrane skeleton. The chain is Tropomodulin-1 (Tmod1) from Rattus norvegicus (Rat).